Reading from the N-terminus, the 124-residue chain is NADH dehydrogenase [ubiquinone] 1 alpha subcomplex subunit 6 (124 aa).

This sequence belongs to the complex I LYR family.

Its subcellular location is the mitochondrion inner membrane. In terms of biological role, accessory subunit of the mitochondrial membrane respiratory chain NADH dehydrogenase (Complex I), that is believed to be not involved in catalysis. Complex I functions in the transfer of electrons from NADH to the respiratory chain. The immediate electron acceptor for the enzyme is believed to be ubiquinone. In Dictyostelium discoideum (Social amoeba), this protein is NADH dehydrogenase [ubiquinone] 1 alpha subcomplex subunit 6 (ndufa6).